The chain runs to 80 residues: Large ribosomal subunit protein eL13 (80 aa).

It belongs to the eukaryotic ribosomal protein eL13 family.

This chain is Large ribosomal subunit protein eL13, found in Aeropyrum pernix (strain ATCC 700893 / DSM 11879 / JCM 9820 / NBRC 100138 / K1).